Reading from the N-terminus, the 141-residue chain is Large ribosomal subunit protein uL11 (141 aa).

Belongs to the universal ribosomal protein uL11 family. In terms of assembly, part of the ribosomal stalk of the 50S ribosomal subunit. Interacts with L10 and the large rRNA to form the base of the stalk. L10 forms an elongated spine to which L12 dimers bind in a sequential fashion forming a multimeric L10(L12)X complex. Post-translationally, one or more lysine residues are methylated.

Its function is as follows. Forms part of the ribosomal stalk which helps the ribosome interact with GTP-bound translation factors. The protein is Large ribosomal subunit protein uL11 of Synechococcus sp. (strain CC9605).